The primary structure comprises 212 residues: 7-carboxy-7-deazaguanine synthase (212 aa).

Residues 22-24 (LQG) and arginine 37 contribute to the substrate site. The Radical SAM core domain maps to 28–212 (NTGMPAVFVR…VQTHKWAGIE (185 aa)). Cysteine 41, cysteine 45, and cysteine 48 together coordinate [4Fe-4S] cluster. Position 50 (threonine 50) interacts with Mg(2+). Threonine 78 is a substrate binding site. S-adenosyl-L-methionine-binding positions include glycine 80 and 122-124 (SPK).

Belongs to the radical SAM superfamily. 7-carboxy-7-deazaguanine synthase family. As to quaternary structure, homodimer. [4Fe-4S] cluster serves as cofactor. Requires S-adenosyl-L-methionine as cofactor. Mg(2+) is required as a cofactor.

It catalyses the reaction 6-carboxy-5,6,7,8-tetrahydropterin + H(+) = 7-carboxy-7-deazaguanine + NH4(+). It participates in purine metabolism; 7-cyano-7-deazaguanine biosynthesis. Its function is as follows. Catalyzes the complex heterocyclic radical-mediated conversion of 6-carboxy-5,6,7,8-tetrahydropterin (CPH4) to 7-carboxy-7-deazaguanine (CDG), a step common to the biosynthetic pathways of all 7-deazapurine-containing compounds. The chain is 7-carboxy-7-deazaguanine synthase from Neisseria meningitidis serogroup B (strain ATCC BAA-335 / MC58).